The sequence spans 507 residues: F-box only protein 31 (507 aa).

The disordered stretch occupies residues 19–42 (RQQRRGPAETAAADSEADTDPEEE). Ser-33 bears the Phosphoserine mark. The segment covering 33 to 42 (SEADTDPEEE) has biased composition (acidic residues). Thr-37 carries the phosphothreonine modification. Residues 50–55 (RCSLLE) carry the D box motif. Residues 50–96 (RCSLLELPPELLVEIFASLPGTDLPSLAQVCSRFRRILHTDTIWRRR) enclose the F-box domain. Residues Cys-192, His-200, Cys-216, and His-222 each contribute to the Zn(2+) site. Ser-264 is modified (phosphoserine; by ATM). The short motif at 283–285 (DDL) is the DDL motif element. The disordered stretch occupies residues 364–421 (RQEQEAGEGPAPHREPAVKDPEGPPAKASKEAGPGAEAAEQSSTSGQGQPFVLPAGVS). Over residues 374–385 (APHREPAVKDPE) the composition is skewed to basic and acidic residues. A Phosphoserine modification is found at Ser-448.

Belongs to the FBXO31 family. Part of a SCF (SKP1-cullin-F-box) protein ligase complex SCF(FBXO31) composed of CUL1, SKP1, RBX1 and FBXO31. Interacts (when phosphorylated at Ser-33) with CDC20, promoting ubiquitination by the APC/C complex. Phosphorylation at Ser-264 by ATM following gamma-irradiation results in its stabilization. Phosphorylation at Ser-448 in absence of stress promotes its ubiquitination and degradation by the SCF(FBXO46) complex. Phosphorylation at Ser-33 by AKT1 promotes association with CDC20 and ubiquitination by the APC/C complex. Post-translationally, ubiquitinated by the SCF(FBXO46) complex in absence of stress, promoting its degradation. Ubiquitinated by the APC/C complex following phosphorylation at Ser-33, leading to its degradation by the proteasome.

Its subcellular location is the cytoplasm. It is found in the cytoskeleton. The protein resides in the microtubule organizing center. The protein localises to the centrosome. It participates in protein modification; protein ubiquitination. Functionally, substrate-recognition component of the SCF(FBXO31) protein ligase complex, which specifically mediates the ubiquitination of proteins amidated at their C-terminus in response to oxidative stress, leading to their degradation by the proteasome. FBXO31 specifically recognizes and binds C-terminal peptides bearing an amide: C-terminal amidation in response to oxidative stress takes place following protein fragmentation. The SCF(FBXO31) also plays a role in G1 arrest following DNA damage by mediating ubiquitination of phosphorylated cyclin-D1 (CCND1), promoting its degradation by the proteasome, resulting in G1 arrest. The SCF(FBXO31) complex is however not a major regulator of CCND1 stability during the G1/S transition. In response to genotoxic stress, the SCF(FBXO31) complex directs ubiquitination and degradation of phosphorylated MDM2, thereby promoting p53/TP53-mediated DNA damage response. SCF(FBXO31) complex is required for genomic integrity by catalyzing ubiquitination and degradation of cyclin-A (CCNA1 and/or CCNA2) during the G1 phase. In response to genotoxic stress, the SCF(FBXO31) complex directs ubiquitination and degradation of phosphorylated FBXO46 and MAP2K6. SCF(FBXO31) complex promotes ubiquitination and degradation of CDT1 during the G2 phase to prevent re-replication. The SCF(FBXO31) complex also mediates ubiquitination and degradation of DUSP6, OGT and PARD6A. The protein is F-box only protein 31 of Rattus norvegicus (Rat).